A 231-amino-acid chain; its full sequence is Ureidoacrylate amidohydrolase RutB (231 aa).

Catalysis depends on Asp25, which acts as the Proton acceptor. Lys134 is an active-site residue. Cys167 acts as the Nucleophile in catalysis.

The protein belongs to the isochorismatase family. RutB subfamily.

The enzyme catalyses (Z)-3-ureidoacrylate + H2O + H(+) = (Z)-3-aminoacrylate + NH4(+) + CO2. It carries out the reaction (Z)-3-ureidoacrylate + H2O = (Z)-3-aminoacrylate + carbamate + H(+). It catalyses the reaction (Z)-2-methylureidoacrylate + H2O + H(+) = (Z)-2-methylaminoacrylate + NH4(+) + CO2. Functionally, hydrolyzes ureidoacrylate to form aminoacrylate and carbamate. The carbamate hydrolyzes spontaneously, thereby releasing one of the nitrogen atoms of the pyrimidine ring as ammonia and one of its carbon atoms as CO2. The polypeptide is Ureidoacrylate amidohydrolase RutB (Escherichia coli (strain SMS-3-5 / SECEC)).